The sequence spans 157 residues: Endoribonuclease YbeY (157 aa).

Zn(2+)-binding residues include histidine 114, histidine 118, and histidine 124.

It belongs to the endoribonuclease YbeY family. Zn(2+) is required as a cofactor.

It localises to the cytoplasm. Functionally, single strand-specific metallo-endoribonuclease involved in late-stage 70S ribosome quality control and in maturation of the 3' terminus of the 16S rRNA. This Edwardsiella ictaluri (strain 93-146) protein is Endoribonuclease YbeY.